Here is a 177-residue protein sequence, read N- to C-terminus: Large ribosomal subunit protein uL6 (177 aa).

This sequence belongs to the universal ribosomal protein uL6 family. As to quaternary structure, part of the 50S ribosomal subunit.

Functionally, this protein binds to the 23S rRNA, and is important in its secondary structure. It is located near the subunit interface in the base of the L7/L12 stalk, and near the tRNA binding site of the peptidyltransferase center. The protein is Large ribosomal subunit protein uL6 of Magnetococcus marinus (strain ATCC BAA-1437 / JCM 17883 / MC-1).